We begin with the raw amino-acid sequence, 284 residues long: Asialoglycoprotein receptor 1 (284 aa).

Over residues Met-1 to His-18 the composition is skewed to basic and acidic residues. The segment at Met-1–Pro-25 is disordered. The Cytoplasmic segment spans residues Met-1–Arg-39. An Endocytosis signal motif is present at residues Tyr-5–Phe-8. Cys-35 carries S-palmitoyl cysteine lipidation. A helical; Signal-anchor for type II membrane protein transmembrane segment spans residues Leu-40–Ser-60. A coiled-coil region spans residues Thr-59–Glu-117. At Gln-61–Asn-284 the chain is on the extracellular side. 3 N-linked (GlcNAc...) asparagine glycosylation sites follow: Asn-75, Asn-78, and Asn-146. 3 disulfide bridges follow: Cys-153-Cys-164, Cys-181-Cys-276, and Cys-254-Cys-268. One can recognise a C-type lectin domain in the interval Tyr-160–Glu-277. Val-190, Glu-196, Asp-215, Gln-239, Asp-241, Glu-252, Asp-253, Asn-264, Asp-265, and Glu-277 together coordinate Ca(2+).

Interacts with LASS2. In terms of processing, phosphorylated on a cytoplasmic Ser residue. As to expression, expressed exclusively in hepatic parenchymal cells.

Its subcellular location is the membrane. Mediates the endocytosis of plasma glycoproteins to which the terminal sialic acid residue on their complex carbohydrate moieties has been removed. The receptor recognizes terminal galactose and N-acetylgalactosamine units. After ligand binding to the receptor, the resulting complex is internalized and transported to a sorting organelle, where receptor and ligand are disassociated. The receptor then returns to the cell membrane surface. The chain is Asialoglycoprotein receptor 1 (Asgr1) from Mus musculus (Mouse).